A 341-amino-acid polypeptide reads, in one-letter code: Ubiquinone biosynthesis protein COQ4, mitochondrial (341 aa).

A mitochondrion-targeting transit peptide spans 1-16 (MLSRISSVRIGTQVRQ). 4 residues coordinate Zn(2+): H220, D221, H224, and E236.

The protein belongs to the COQ4 family. Component of a multi-subunit COQ enzyme complex, composed of at least COQ3, COQ4, COQ5, COQ6, COQ7 and COQ9. Requires Zn(2+) as cofactor.

The protein localises to the mitochondrion inner membrane. The catalysed reaction is a 4-hydroxy-3-methoxy-5-(all-trans-polyprenyl)benzoate + H(+) = a 2-methoxy-6-(all-trans-polyprenyl)phenol + CO2. It functions in the pathway cofactor biosynthesis; ubiquinone biosynthesis. In terms of biological role, lyase that catalyzes the C1-decarboxylation of 4-hydroxy-3-methoxy-5-(all-trans-polyprenyl)benzoic acid into 2-methoxy-6-(all-trans-polyprenyl)phenol during ubiquinone biosynthesis. In Vanderwaltozyma polyspora (strain ATCC 22028 / DSM 70294 / BCRC 21397 / CBS 2163 / NBRC 10782 / NRRL Y-8283 / UCD 57-17) (Kluyveromyces polysporus), this protein is Ubiquinone biosynthesis protein COQ4, mitochondrial.